Consider the following 606-residue polypeptide: NADH-ubiquinone oxidoreductase chain 5 (606 aa).

Helical transmembrane passes span 3–23, 35–55, 87–107, 117–137, 140–160, 171–191, 211–233, 241–261, 273–293, 301–320, 325–347, 366–386, 402–422, 457–477, 488–508, and 582–602; these read LFTS…LMSL, YVKT…LIFI, MIFT…SMWY, FFKY…ANNL, LFIG…WWYG, AILY…WFLF, LPLL…HPWL, TPVS…FLLI, MQTL…ICAL, IIAF…IGIN, AFLH…GSII, LPFT…TPFL, SYTN…TAVY, LLIG…PMTI, LTAL…SLMT, and GLIK…MLLF.

The protein belongs to the complex I subunit 5 family. In terms of assembly, core subunit of respiratory chain NADH dehydrogenase (Complex I) which is composed of 45 different subunits.

It is found in the mitochondrion inner membrane. It carries out the reaction a ubiquinone + NADH + 5 H(+)(in) = a ubiquinol + NAD(+) + 4 H(+)(out). Its function is as follows. Core subunit of the mitochondrial membrane respiratory chain NADH dehydrogenase (Complex I) which catalyzes electron transfer from NADH through the respiratory chain, using ubiquinone as an electron acceptor. Essential for the catalytic activity and assembly of complex I. This Pseudosoriculus fumidus (Taiwanese brown-toothed shrew) protein is NADH-ubiquinone oxidoreductase chain 5 (MT-ND5).